The primary structure comprises 520 residues: Bifunctional purine biosynthesis protein PurH (520 aa).

The MGS-like domain occupies 1–147; it reads MAKIGRALIS…KNNRDVTVVV (147 aa).

The protein belongs to the PurH family.

The enzyme catalyses (6R)-10-formyltetrahydrofolate + 5-amino-1-(5-phospho-beta-D-ribosyl)imidazole-4-carboxamide = 5-formamido-1-(5-phospho-D-ribosyl)imidazole-4-carboxamide + (6S)-5,6,7,8-tetrahydrofolate. It carries out the reaction IMP + H2O = 5-formamido-1-(5-phospho-D-ribosyl)imidazole-4-carboxamide. It participates in purine metabolism; IMP biosynthesis via de novo pathway; 5-formamido-1-(5-phospho-D-ribosyl)imidazole-4-carboxamide from 5-amino-1-(5-phospho-D-ribosyl)imidazole-4-carboxamide (10-formyl THF route): step 1/1. It functions in the pathway purine metabolism; IMP biosynthesis via de novo pathway; IMP from 5-formamido-1-(5-phospho-D-ribosyl)imidazole-4-carboxamide: step 1/1. This is Bifunctional purine biosynthesis protein PurH from Citrifermentans bemidjiense (strain ATCC BAA-1014 / DSM 16622 / JCM 12645 / Bem) (Geobacter bemidjiensis).